The following is a 204-amino-acid chain: MELKQSLSTHLEAEKPLRRYGAVEETAWKTEGLGRNQLDIISMAETTMMPEEIELEMAKIQRLREVLVRRESELRFMMDDIQLCKDIMDLKQELQNLVAIPEKEKTKLQKQREDELIQKIHKLVQKRDFLVDDAEVERLREQEEDKEMADFLRIKLKPLDKVTKSPASSRAEKKAEPPPSKPTVAKTGLALIKDCCGATQCNIM.

In terms of domain architecture, bMERB spans 3–150 (LKQSLSTHLE…EQEEDKEMAD (148 aa)). The disordered stretch occupies residues 162-187 (VTKSPASSRAEKKAEPPPSKPTVAKT).

This is bMERB domain-containing protein 1 (BMERB1) from Pongo abelii (Sumatran orangutan).